The primary structure comprises 368 residues: 3-dehydroquinate synthase (368 aa).

NAD(+) is bound by residues 112–116 (GVIGD), 136–137 (TT), Lys149, Lys158, and 176–179 (TLIT). Zn(2+)-binding residues include Glu191, His256, and His273.

The protein belongs to the sugar phosphate cyclases superfamily. Dehydroquinate synthase family. It depends on Co(2+) as a cofactor. Requires Zn(2+) as cofactor. The cofactor is NAD(+).

Its subcellular location is the cytoplasm. It carries out the reaction 7-phospho-2-dehydro-3-deoxy-D-arabino-heptonate = 3-dehydroquinate + phosphate. The protein operates within metabolic intermediate biosynthesis; chorismate biosynthesis; chorismate from D-erythrose 4-phosphate and phosphoenolpyruvate: step 2/7. In terms of biological role, catalyzes the conversion of 3-deoxy-D-arabino-heptulosonate 7-phosphate (DAHP) to dehydroquinate (DHQ). The sequence is that of 3-dehydroquinate synthase from Prochlorococcus marinus (strain NATL2A).